Consider the following 192-residue polypeptide: MKDVSKNQEENISDTALTNELIHLLGHSRHDWMNKLQLIKGNLSLQKYDRVFEMIEEMVIDAKHESKLSNLKTPHLAFDFLTFNWKTHYMTLEYEVLGEIKDLSAYDQKLAKLMRKLFHLFDQAVSRESENHLTVSLQTDHPDRQLILYLDFHGAFADPSAFDDIRQNGYEDVDIMRFEITSHECLIEIGLD.

At His30 the chain carries Phosphohistidine.

As to quaternary structure, homodimer. Dimerization is essential for activity as both monomers contribute to the formation of the active site. In terms of processing, phosphorylated by spo0F.

The protein resides in the cytoplasm. Key element in the phosphorelay regulating sporulation initiation. Acts on spo0A. Mediates reversible phosphoryl transfer from spo0F to spo0A. The polypeptide is Sporulation initiation phosphotransferase B (spo0B) (Bacillus subtilis (strain 168)).